Here is a 96-residue protein sequence, read N- to C-terminus: MEQAPEDQGPQREPYNEWTLELLEELKNEAVRHFPRPWLHGLGQYIYNTYGDTWEGVEAIIRILQQLLFIHFRIGCQHSRIGITPQRRVRDGPGRP.

Positions 1-42 (MEQAPEDQGPQREPYNEWTLELLEELKNEAVRHFPRPWLHGL) are homooligomerization. Ser-79 carries the post-translational modification Phosphoserine; by host.

Belongs to the HIV-1 VPR protein family. As to quaternary structure, homooligomer, may form homodimer. Interacts with p6-gag region of the Pr55 Gag precursor protein through a (Leu-X-X)4 motif near the C-terminus of the P6gag protein. Interacts with host UNG. May interact with host RAD23A/HHR23A. Interacts with host VPRBP/DCAF1, leading to hijack the CUL4A-RBX1-DDB1-DCAF1/VPRBP complex, mediating ubiquitination of host proteins such as TERT and ZGPAT and arrest of the cell cycle in G2 phase. In terms of processing, phosphorylated on several residues by host. These phosphorylations regulate VPR activity for the nuclear import of the HIV-1 pre-integration complex.

The protein resides in the virion. Its subcellular location is the host nucleus. It localises to the host extracellular space. Its function is as follows. During virus replication, may deplete host UNG protein, and incude G2-M cell cycle arrest. Acts by targeting specific host proteins for degradation by the 26S proteasome, through association with the cellular CUL4A-DDB1 E3 ligase complex by direct interaction with host VPRPB/DCAF-1. Cell cycle arrest reportedly occurs within hours of infection and is not blocked by antiviral agents, suggesting that it is initiated by the VPR carried into the virion. Additionally, VPR induces apoptosis in a cell cycle dependent manner suggesting that these two effects are mechanistically linked. Detected in the serum and cerebrospinal fluid of AIDS patient, VPR may also induce cell death to bystander cells. In terms of biological role, during virus entry, plays a role in the transport of the viral pre-integration (PIC) complex to the host nucleus. This function is crucial for viral infection of non-dividing macrophages. May act directly at the nuclear pore complex, by binding nucleoporins phenylalanine-glycine (FG)-repeat regions. The chain is Protein Vpr from Human immunodeficiency virus type 1 group M subtype G (isolate 92NG083) (HIV-1).